A 59-amino-acid chain; its full sequence is Large ribosomal subunit protein bL32 (59 aa).

Belongs to the bacterial ribosomal protein bL32 family.

This is Large ribosomal subunit protein bL32 from Malacoplasma penetrans (strain HF-2) (Mycoplasma penetrans).